The sequence spans 132 residues: Small ribosomal subunit protein uS9 (132 aa).

The disordered stretch occupies residues 100–132 (LKSNGLLTRDDRTKERKKPGLKRARKAPQYTKR). A compositionally biased stretch (basic residues) spans 114–132 (ERKKPGLKRARKAPQYTKR).

It belongs to the universal ribosomal protein uS9 family.

The sequence is that of Small ribosomal subunit protein uS9 from Dehalococcoides mccartyi (strain ATCC BAA-2100 / JCM 16839 / KCTC 5957 / BAV1).